The following is a 212-amino-acid chain: Thiamine-phosphate synthase (212 aa).

Residues 40–44 (QFREK) and N75 contribute to the 4-amino-2-methyl-5-(diphosphooxymethyl)pyrimidine site. The Mg(2+) site is built by D76 and D95. S113 serves as a coordination point for 4-amino-2-methyl-5-(diphosphooxymethyl)pyrimidine. Residue 139–141 (TTS) participates in 2-[(2R,5Z)-2-carboxy-4-methylthiazol-5(2H)-ylidene]ethyl phosphate binding. 4-amino-2-methyl-5-(diphosphooxymethyl)pyrimidine is bound at residue K142. 2-[(2R,5Z)-2-carboxy-4-methylthiazol-5(2H)-ylidene]ethyl phosphate-binding positions include G171 and 191–192 (IS).

Belongs to the thiamine-phosphate synthase family. It depends on Mg(2+) as a cofactor.

It carries out the reaction 2-[(2R,5Z)-2-carboxy-4-methylthiazol-5(2H)-ylidene]ethyl phosphate + 4-amino-2-methyl-5-(diphosphooxymethyl)pyrimidine + 2 H(+) = thiamine phosphate + CO2 + diphosphate. The enzyme catalyses 2-(2-carboxy-4-methylthiazol-5-yl)ethyl phosphate + 4-amino-2-methyl-5-(diphosphooxymethyl)pyrimidine + 2 H(+) = thiamine phosphate + CO2 + diphosphate. It catalyses the reaction 4-methyl-5-(2-phosphooxyethyl)-thiazole + 4-amino-2-methyl-5-(diphosphooxymethyl)pyrimidine + H(+) = thiamine phosphate + diphosphate. Its pathway is cofactor biosynthesis; thiamine diphosphate biosynthesis; thiamine phosphate from 4-amino-2-methyl-5-diphosphomethylpyrimidine and 4-methyl-5-(2-phosphoethyl)-thiazole: step 1/1. Condenses 4-methyl-5-(beta-hydroxyethyl)thiazole monophosphate (THZ-P) and 2-methyl-4-amino-5-hydroxymethyl pyrimidine pyrophosphate (HMP-PP) to form thiamine monophosphate (TMP). This is Thiamine-phosphate synthase from Staphylococcus saprophyticus subsp. saprophyticus (strain ATCC 15305 / DSM 20229 / NCIMB 8711 / NCTC 7292 / S-41).